The following is a 176-amino-acid chain: Large ribosomal subunit protein uL6 (176 aa).

It belongs to the universal ribosomal protein uL6 family. Part of the 50S ribosomal subunit.

This protein binds to the 23S rRNA, and is important in its secondary structure. It is located near the subunit interface in the base of the L7/L12 stalk, and near the tRNA binding site of the peptidyltransferase center. This chain is Large ribosomal subunit protein uL6, found in Methanosarcina mazei (strain ATCC BAA-159 / DSM 3647 / Goe1 / Go1 / JCM 11833 / OCM 88) (Methanosarcina frisia).